The chain runs to 533 residues: MEVLGLLKFEVSGTIVTVTLLVALLALLKWYSMSAFSRLEKLGIRHPKPSPFVGNLMFFRQGFWESQLELRERYGPLCGYYLGRRMHVVISEPDMIKQVLVENFSNFSNRMASGLEPKMVADSVLLLRDRRWEEVRGALMSSFSPEKLDEMTPLISQACELLVAHLKRYAASRDAFNIQRCYCCYTIDVVASVAFGTQVDSQNSPEDPFVQHCRRASTFCIPRPLLVLILSFPSIMVPLARILPNKNRDELNGFFNTLIRNVIALRDQQAAEERRRDFLQMVLDAQHSMNSVGVEGFDMVPESLSSSECTKEPPQRCHPTSTSKPFTVDEIVGQAFLFLIAGHEVITNTLSFITYLLATHPDCQERLLKEVDLFMGKHPAPEYHSLQEGLPYLDMVISETLRMYPPAFRFTREAAQDCEVLGQRIPAGTVLEIAVGALHHDPEHWPNPETFDPERFTAEARLQRRPFTYLPFGAGPRSCLGVRLGLLVVKLTILQVLHKFRFEASPETQVPLQLESKSALGPKNGVYIKIVSR.

At 1–10 (MEVLGLLKFE) the chain is on the cytoplasmic side. Residues 11–31 (VSGTIVTVTLLVALLALLKWY) traverse the membrane as a helical segment. Residues 32-75 (SMSAFSRLEKLGIRHPKPSPFVGNLMFFRQGFWESQLELRERYG) lie on the Lumenal side of the membrane. A helical membrane pass occupies residues 76–96 (PLCGYYLGRRMHVVISEPDMI). Residues 97 to 223 (KQVLVENFSN…RRASTFCIPR (127 aa)) are Cytoplasmic-facing. The chain crosses the membrane as a helical span at residues 224–244 (PLLVLILSFPSIMVPLARILP). Over 245 to 335 (NKNRDELNGF…FTVDEIVGQA (91 aa)) the chain is Lumenal. The chain crosses the membrane as a helical span at residues 336–356 (FLFLIAGHEVITNTLSFITYL). The Cytoplasmic portion of the chain corresponds to 357–533 (LATHPDCQER…NGVYIKIVSR (177 aa)). C479 is a binding site for heme.

The protein belongs to the cytochrome P450 family. Monomer. Heme is required as a cofactor. Expressed primarily in lung, kidney, and spleen.

The protein resides in the endoplasmic reticulum membrane. It catalyses the reaction prostaglandin H2 = thromboxane A2. The catalysed reaction is prostaglandin H2 = (12S)-hydroxy-(5Z,8E,10E)-heptadecatrienoate + malonaldehyde. It carries out the reaction a hydroperoxyeicosatetraenoate = an oxoeicosatetraenoate + H2O. The enzyme catalyses (15S)-hydroperoxy-(5Z,8Z,11Z,13E)-eicosatetraenoate = 15-oxo-(5Z,8Z,11Z,13E)-eicosatetraenoate + H2O. It catalyses the reaction (15S)-hydroperoxy-(5Z,8Z,11Z,13E)-eicosatetraenoate + AH2 = (15S)-hydroxy-(5Z,8Z,11Z,13E)-eicosatetraenoate + A + H2O. Its function is as follows. Catalyzes the conversion of prostaglandin H2 (PGH2) to thromboxane A2 (TXA2), a potent inducer of blood vessel constriction and platelet aggregation. Also cleaves PGH2 to 12-hydroxy-heptadecatrienoicacid (12-HHT) and malondialdehyde, which is known to act as a mediator of DNA damage. 12-HHT and malondialdehyde are formed stoichiometrically in the same amounts as TXA2. Additionally, displays dehydratase activity, toward (15S)-hydroperoxy-(5Z,8Z,11Z,13E)-eicosatetraenoate (15(S)-HPETE) producing 15-KETE and 15-HETE. The chain is Thromboxane-A synthase (Tbxas1) from Mus musculus (Mouse).